A 70-amino-acid polypeptide reads, in one-letter code: Brevinin-1MT1 (70 aa).

An N-terminal signal peptide occupies residues 1–22 (MFTLKKSLLLLFFLGTINLSLC). Residues 23–44 (EQERDADEEERRDDDEMDVEVE) constitute a propeptide that is removed on maturation. Cysteines 64 and 70 form a disulfide.

The protein belongs to the frog skin active peptide (FSAP) family. Brevinin subfamily. Expressed by the skin glands.

It localises to the secreted. Functionally, antimicrobial peptide with activity against a variety of Gram-negative and Gram-positive bacteria and against fungi. Shows strong hemolytic activity against human erythrocytes. The protein is Brevinin-1MT1 of Amolops mantzorum (Sichuan torrent frog).